Consider the following 203-residue polypeptide: Outer-membrane lipoprotein carrier protein (203 aa).

The N-terminal stretch at 1 to 19 is a signal peptide; sequence MKKSIVVLFSAVLPFAVFA.

Belongs to the LolA family. In terms of assembly, monomer.

The protein localises to the periplasm. Functionally, participates in the translocation of lipoproteins from the inner membrane to the outer membrane. Only forms a complex with a lipoprotein if the residue after the N-terminal Cys is not an aspartate (The Asp acts as a targeting signal to indicate that the lipoprotein should stay in the inner membrane). This Shewanella amazonensis (strain ATCC BAA-1098 / SB2B) protein is Outer-membrane lipoprotein carrier protein.